A 343-amino-acid polypeptide reads, in one-letter code: uncharacterized protein (343 aa).

Disordered regions lie at residues 1–25, 62–119, and 169–188; these read MSSK…LSGT, KNIR…DCSD, and NPKI…TKKS. Residues 62–71 show a composition bias toward basic residues; sequence KNIRQFKKSQ. The span at 72 to 81 shows a compositional bias: basic and acidic residues; the sequence is NKTDTEKSGE. The span at 83 to 107 shows a compositional bias: acidic residues; that stretch reads NDSDYSDYSDNSDDVDDLDDVDDLN.

This is an uncharacterized protein from Acanthamoeba polyphaga (Amoeba).